Reading from the N-terminus, the 169-residue chain is Co-chaperone protein HscB homolog (169 aa).

The 73-residue stretch at 2–74 (NYFDLFSLPV…CLRAQYLLLL (73 aa)) folds into the J domain.

It belongs to the HscB family. As to quaternary structure, interacts with HscA and stimulates its ATPase activity.

Its function is as follows. Co-chaperone involved in the maturation of iron-sulfur cluster-containing proteins. Seems to help targeting proteins to be folded toward HscA. The sequence is that of Co-chaperone protein HscB homolog from Psychromonas ingrahamii (strain DSM 17664 / CCUG 51855 / 37).